Consider the following 311-residue polypeptide: 2-methoxy-6-polyprenyl-1,4-benzoquinol methylase, mitochondrial (311 aa).

Residues Met1–Arg29 constitute a mitochondrion transit peptide. S-adenosyl-L-methionine is bound by residues Thr100, Asp155, and Asn183–Ala184.

Belongs to the class I-like SAM-binding methyltransferase superfamily. MenG/UbiE family. In terms of assembly, component of a multi-subunit COQ enzyme complex, composed of at least COQ3, COQ4, COQ5, COQ6, COQ7 and COQ9.

It localises to the mitochondrion inner membrane. The catalysed reaction is a 2-methoxy-6-(all-trans-polyprenyl)benzene-1,4-diol + S-adenosyl-L-methionine = a 5-methoxy-2-methyl-3-(all-trans-polyprenyl)benzene-1,4-diol + S-adenosyl-L-homocysteine + H(+). Its pathway is cofactor biosynthesis; ubiquinone biosynthesis. Functionally, methyltransferase required for the conversion of 2-polyprenyl-6-methoxy-1,4-benzoquinol (DDMQH2) to 2-polyprenyl-3-methyl-6-methoxy-1,4-benzoquinol (DMQH2). The polypeptide is 2-methoxy-6-polyprenyl-1,4-benzoquinol methylase, mitochondrial (Gallus gallus (Chicken)).